We begin with the raw amino-acid sequence, 323 residues long: Probable cell division protein WhiA (323 aa).

The H-T-H motif DNA-binding region spans 275–309; the sequence is TLKELGEMLTTGQVSKSGINHRLRKLDQIAERLRS.

The protein belongs to the WhiA family.

Its function is as follows. Involved in cell division and chromosome segregation. The polypeptide is Probable cell division protein WhiA (Listeria monocytogenes serotype 4b (strain CLIP80459)).